We begin with the raw amino-acid sequence, 199 residues long: Dephospho-CoA kinase (199 aa).

Residues 11 to 199 enclose the DPCK domain; sequence RIGLTGGIAS…DLHDQLDALL (189 aa). 19 to 24 contacts ATP; that stretch reads ASGKSS.

This sequence belongs to the CoaE family.

Its subcellular location is the cytoplasm. The enzyme catalyses 3'-dephospho-CoA + ATP = ADP + CoA + H(+). It participates in cofactor biosynthesis; coenzyme A biosynthesis; CoA from (R)-pantothenate: step 5/5. Functionally, catalyzes the phosphorylation of the 3'-hydroxyl group of dephosphocoenzyme A to form coenzyme A. The polypeptide is Dephospho-CoA kinase (Synechococcus sp. (strain CC9902)).